The following is a 225-amino-acid chain: UPF0758 protein BCG9842_B0662 (225 aa).

Residues 103–225 form the MPN domain; it reads SIRSPEDCAK…FVSLKEKGHI (123 aa). Residues histidine 174, histidine 176, and aspartate 187 each coordinate Zn(2+). A JAMM motif motif is present at residues 174–187; it reads HNHPSGDPTPSRED.

This sequence belongs to the UPF0758 family.

The protein is UPF0758 protein BCG9842_B0662 of Bacillus cereus (strain G9842).